The sequence spans 335 residues: Deoxyhypusine hydroxylase (335 aa).

HEAT-like PBS-type repeat units lie at residues 71–97 (LKHE…VAKD), 104–130 (CRHE…LRDN), 200–233 (LRYR…GLKD), 238–264 (FRHE…ALSN), and 271–298 (VRHE…FLND). Fe cation-binding residues include His73, Glu74, His106, and Glu107. The Fe cation site is built by His240, Glu241, His273, and Glu274.

Belongs to the deoxyhypusine hydroxylase family. Fe(2+) is required as a cofactor.

The protein resides in the cytoplasm. Its subcellular location is the nucleus. The enzyme catalyses [eIF5A protein]-deoxyhypusine + AH2 + O2 = [eIF5A protein]-hypusine + A + H2O. It participates in protein modification; eIF5A hypusination. Catalyzes the hydroxylation of the N(6)-(4-aminobutyl)-L-lysine intermediate to form hypusine, an essential post-translational modification only found in mature eIF-5A factor. In Aspergillus fumigatus (strain ATCC MYA-4609 / CBS 101355 / FGSC A1100 / Af293) (Neosartorya fumigata), this protein is Deoxyhypusine hydroxylase (lia1).